Reading from the N-terminus, the 326-residue chain is Beta-ketoacyl-[acyl-carrier-protein] synthase III (326 aa).

Residues cysteine 113 and histidine 253 contribute to the active site. Residues 254–258 (QANIR) form an ACP-binding region. Residue asparagine 283 is part of the active site.

It belongs to the thiolase-like superfamily. FabH family. Homodimer.

The protein resides in the cytoplasm. It carries out the reaction malonyl-[ACP] + acetyl-CoA + H(+) = 3-oxobutanoyl-[ACP] + CO2 + CoA. Its pathway is lipid metabolism; fatty acid biosynthesis. In terms of biological role, catalyzes the condensation reaction of fatty acid synthesis by the addition to an acyl acceptor of two carbons from malonyl-ACP. Catalyzes the first condensation reaction which initiates fatty acid synthesis and may therefore play a role in governing the total rate of fatty acid production. Possesses both acetoacetyl-ACP synthase and acetyl transacylase activities. Its substrate specificity determines the biosynthesis of branched-chain and/or straight-chain of fatty acids. The polypeptide is Beta-ketoacyl-[acyl-carrier-protein] synthase III (Wolbachia sp. subsp. Brugia malayi (strain TRS)).